A 530-amino-acid chain; its full sequence is B3 domain-containing protein REM-like 3 (530 aa).

2 consecutive DNA-binding regions (TF-B3) follow at residues 11-103 (KPHF…FGLS) and 144-241 (DFVV…FPLE). Residues 251 to 276 (SKKVKQEVEHEESVKEETNVESGKLK) form a disordered region. Over residues 254 to 276 (VKQEVEHEESVKEETNVESGKLK) the composition is skewed to basic and acidic residues. 2 consecutive DNA-binding regions (TF-B3) follow at residues 296-393 (NFVV…FPLE) and 431-530 (SFVV…WDKK).

It is found in the nucleus. The sequence is that of B3 domain-containing protein REM-like 3 from Arabidopsis thaliana (Mouse-ear cress).